The sequence spans 461 residues: Photosystem II CP43 reaction center protein (461 aa).

Residues 1 to 2 (ME) constitute a propeptide that is removed on maturation. Thr3 carries the N-acetylthreonine modification. Phosphothreonine is present on Thr3. 5 helical membrane-spanning segments follow: residues 57–81 (LFEVAHFVPEKPMYEQGLILLPHLA), 122–143 (LLGPETLEESFPFFGYVWKDRN), 166–188 (KALYFGGVYDTWAPGGGDVRKIS), 243–263 (KPFAWARRALVWSGEAYLSYS), and 279–300 (WFNNTAYPSEFYGPTGPEASQA). Glu355 lines the [CaMn4O5] cluster pocket. The helical transmembrane segment at 435-459 (RARAAAAGFEKGIDRDFEPVLSMTP) threads the bilayer.

The protein belongs to the PsbB/PsbC family. PsbC subfamily. PSII is composed of 1 copy each of membrane proteins PsbA, PsbB, PsbC, PsbD, PsbE, PsbF, PsbH, PsbI, PsbJ, PsbK, PsbL, PsbM, PsbT, PsbX, PsbY, PsbZ, Psb30/Ycf12, at least 3 peripheral proteins of the oxygen-evolving complex and a large number of cofactors. It forms dimeric complexes. Requires Binds multiple chlorophylls and provides some of the ligands for the Ca-4Mn-5O cluster of the oxygen-evolving complex. It may also provide a ligand for a Cl- that is required for oxygen evolution. PSII binds additional chlorophylls, carotenoids and specific lipids. as cofactor.

It is found in the plastid. It localises to the chloroplast thylakoid membrane. One of the components of the core complex of photosystem II (PSII). It binds chlorophyll and helps catalyze the primary light-induced photochemical processes of PSII. PSII is a light-driven water:plastoquinone oxidoreductase, using light energy to abstract electrons from H(2)O, generating O(2) and a proton gradient subsequently used for ATP formation. In Trachelium caeruleum (Blue throatwort), this protein is Photosystem II CP43 reaction center protein.